The sequence spans 228 residues: Protein boule (228 aa).

The RRM domain occupies 33–110 (NRIFVGGISG…RKLNIAPAIK (78 aa)). The DAZ domain occupies 151-178 (PAAGVPAIYPPSAMQYQPFYQYYSVPMN). Residues 193-214 (PLLHSPTSNPHSPHSQSHPQSP) show a composition bias toward low complexity. Positions 193-228 (PLLHSPTSNPHSPHSQSHPQSPCWSIEDLRDTLPRV) are disordered. Residues 219 to 228 (EDLRDTLPRV) show a composition bias toward basic and acidic residues.

The protein belongs to the RRM DAZ family. Interacts with the translational regulator orb2. As to expression, testis specific.

It is found in the nucleus. The protein resides in the cytoplasm. In terms of biological role, RNA-binding protein that plays a central role in spermatogenesis. Required for meiotic entry and germline differentiation, at the transition between G2 and M phases of meiosis I. Acts by regulating translation of specific mRNAs, possibly by binding to their 3'-UTR. Essential for translation of twine (twe) mRNA. Required for the expression of various genes such as CG6784, CG17210, CG15841 scpr-B, scpr-C, and rho-6. The sequence is that of Protein boule (bol) from Drosophila melanogaster (Fruit fly).